The sequence spans 79 residues: VICYVGYNNPQTCPPGGNVCFTKTWCDARCHQLGKRVEMGCATTCPKVNRGVDIKCCSTDKCNPFPKTTPPWKRPRGKP.

Cystine bridges form between Cys-3–Cys-20, Cys-13–Cys-41, Cys-26–Cys-30, Cys-45–Cys-56, and Cys-57–Cys-62.

Belongs to the three-finger toxin family. Long-chain subfamily. Type II alpha-neurotoxin sub-subfamily. In terms of tissue distribution, expressed by the venom gland.

It localises to the secreted. In terms of biological role, binds with high affinity to muscular (alpha-1/CHRNA1) and neuronal (alpha-7/CHRNA7) nicotinic acetylcholine receptor (nAChR) and inhibits acetylcholine from binding to the receptor, thereby impairing neuromuscular and neuronal transmission. Produces paralysis, clear dyspnea and lethality on mice. The polypeptide is Alpha-elapitoxin-Aa2e (Acanthophis antarcticus (Common death adder)).